We begin with the raw amino-acid sequence, 438 residues long: MLALFLSSSSYPTLSFLSRSVTLNLARTTTLSALTMSMNLKTHAFAGNPLKSKTPKSTDPFSPTSAFESLKTLIPVIPNHSTPSPDFKVLPFSKGRPLVFSSGGDANTTPIWHLGWVSLADCKVLLASCGVDLNEDSLVYLGPKLEEDLVYWAVDLAEDGFVSELGGRKLCFVELRTLMVAADWADQRAMDELAIAGNARALLEWHNVSQFCGSCGSKTFPKEAGRRKQCSDETCRKRVYPRVDPVVIMLVIDRENDRALLSRQSRYVPRMWSCLAGFIEPGESLEEAVRRETWEETGIEVGDVVYHSSQPWPVGPSSMPCQLMLGFFAFAKTLDINVDKEELEDAQWHSREEVKKALAVAEYRKAQRTAAAKVEQICKGVERSQSLSTDFNLESGELAPMFIPGPFAIAHHLISAWVNQAPDDVHSKQQAGVSLSSL.

The transit peptide at 1 to 36 (MLALFLSSSSYPTLSFLSRSVTLNLARTTTLSALTM) directs the protein to the chloroplast. Residues C212, C215, C230, and C235 each coordinate Zn(2+). Residues Y240, 276–278 (AGF), E292, E296, and E342 contribute to the substrate site. A Nudix hydrolase domain is found at 241 to 371 (PRVDPVVIML…EYRKAQRTAA (131 aa)). 4 residues coordinate Mg(2+): A276, E292, E296, and E342. The Nudix box motif lies at 277–298 (GFIEPGESLEEAVRRETWEETG). Residues 422 to 424 (PDD) carry the Microbody targeting signal motif.

Belongs to the Nudix hydrolase family. NudC subfamily. Requires Mg(2+) as cofactor. Zn(2+) is required as a cofactor. In terms of tissue distribution, expressed in roots, leaves, stems and inflorescences.

It is found in the plastid. It localises to the chloroplast. The enzyme catalyses a 5'-end NAD(+)-phospho-ribonucleoside in mRNA + H2O = a 5'-end phospho-adenosine-phospho-ribonucleoside in mRNA + beta-nicotinamide D-ribonucleotide + 2 H(+). It catalyses the reaction NAD(+) + H2O = beta-nicotinamide D-ribonucleotide + AMP + 2 H(+). It carries out the reaction NADH + H2O = reduced beta-nicotinamide D-ribonucleotide + AMP + 2 H(+). In terms of biological role, mRNA decapping enzyme that specifically removes the nicotinamide adenine dinucleotide (NAD) cap from a subset of mRNAs by hydrolyzing the diphosphate linkage to produce nicotinamide mononucleotide (NMN) and 5' monophosphate mRNA. The NAD-cap is present at the 5'-end of some RNAs; in contrast to the canonical N7 methylguanosine (m7G) cap, the NAD cap promotes mRNA decay. Mediates the hydrolysis of some nucleoside diphosphate derivatives. Has a high affinity for NADPH compared with that for NADH. This chain is Nudix hydrolase 19, chloroplastic (NUDT19), found in Arabidopsis thaliana (Mouse-ear cress).